A 354-amino-acid polypeptide reads, in one-letter code: Protein-arginine kinase (354 aa).

The Phosphagen kinase C-terminal domain maps to 24–254 (IVLSSRIRLA…QQIIQQEKMA (231 aa)). ATP is bound by residues 27-31 (SSRIR), His92, Arg125, 176-180 (RASVM), and 207-212 (RGIYGE). Residues 337 to 342 (RDYRRA) carry the RDXXRA motif of the pArg binding pocket involved in allosteric regulation motif.

This sequence belongs to the ATP:guanido phosphotransferase family.

The catalysed reaction is L-arginyl-[protein] + ATP = N(omega)-phospho-L-arginyl-[protein] + ADP + H(+). Its activity is regulated as follows. Appears to be allosterically activated by the binding of pArg-containing polypeptides to the pArg-binding pocket localized in the C-terminal domain of McsB. In terms of biological role, catalyzes the specific phosphorylation of arginine residues in a large number of proteins. Is part of the bacterial stress response system. Protein arginine phosphorylation has a physiologically important role and is involved in the regulation of many critical cellular processes, such as protein homeostasis, motility, competence, and stringent and stress responses, by regulating gene expression and protein activity. The sequence is that of Protein-arginine kinase from Bacillus cereus (strain ATCC 10987 / NRS 248).